The primary structure comprises 683 residues: Methionine--tRNA ligase (683 aa).

The 'HIGH' region motif lies at 14–24 (PYANGSIHLGH). The Zn(2+) site is built by cysteine 145, cysteine 148, cysteine 158, and cysteine 161. The short motif at 331 to 335 (KMSKS) is the 'KMSKS' region element. Position 334 (lysine 334) interacts with ATP. The interval 545–572 (ASKEDLTASQTDTGAAAPAGNGELAKDP) is disordered. Positions 581 to 683 (TFAAVDLRVA…SGAKPGQRIK (103 aa)) constitute a tRNA-binding domain.

It belongs to the class-I aminoacyl-tRNA synthetase family. MetG type 1 subfamily. In terms of assembly, homodimer. Requires Zn(2+) as cofactor.

It localises to the cytoplasm. It carries out the reaction tRNA(Met) + L-methionine + ATP = L-methionyl-tRNA(Met) + AMP + diphosphate. Is required not only for elongation of protein synthesis but also for the initiation of all mRNA translation through initiator tRNA(fMet) aminoacylation. The protein is Methionine--tRNA ligase of Pseudomonas fluorescens (strain Pf0-1).